Here is a 178-residue protein sequence, read N- to C-terminus: uncharacterized protein (178 aa).

Residues 1–89 (MSAKEGSSHP…GEKKGKTEKL (89 aa)) are disordered. Basic and acidic residues-rich tracts occupy residues 44 to 53 (PYQKNEKVVV) and 61 to 89 (AFLH…TEKL).

This is an uncharacterized protein from Schizosaccharomyces pombe (strain 972 / ATCC 24843) (Fission yeast).